Here is a 273-residue protein sequence, read N- to C-terminus: MATYLVGDLQGCYDELQLLLETVQFNPVQDKLYLVGDLVARGDKSLECLRFVKSLGAAAQMVLGNHDLHLISTALGIKKVSLQDHVEAIFTAPDFVELIDWLRHQPLLVHDEKCDFVMSHAGISPDWDLDTAKSCAREVENELQHGDYHYLISNMYDNQPDRWSADLQGLQRLRYSINVFTRMRFCYRDHRLDFACKASVEKAPQELIPWFNLDNPLFKVQNLVFGHWASLVDTPTPANIYALDTGCVWGNRMTMLRWEDKQYFVQGALKDYF.

It belongs to the Ap4A hydrolase family.

The catalysed reaction is P(1),P(4)-bis(5'-adenosyl) tetraphosphate + H2O = 2 ADP + 2 H(+). Its function is as follows. Hydrolyzes diadenosine 5',5'''-P1,P4-tetraphosphate to yield ADP. The sequence is that of Bis(5'-nucleosyl)-tetraphosphatase, symmetrical from Histophilus somni (strain 2336) (Haemophilus somnus).